The sequence spans 200 residues: ADP-ribosylation factor-like protein 4A (200 aa).

G2 carries the N-myristoyl glycine lipid modification. Residues 27-34 (GLDCAGKT), 75-79 (DVGGQ), and 134-137 (NKQD) each bind GTP.

It belongs to the small GTPase superfamily. Arf family. Interacts with CYTH2. Interacts with KPNA2; the interaction is direct. Does not interact with ARL4A. In terms of processing, myristoylated.

The protein localises to the cell membrane. It localises to the cytoplasm. It is found in the nucleus. Its subcellular location is the nucleolus. Small GTP-binding protein which cycles between an inactive GDP-bound and an active GTP-bound form, and the rate of cycling is regulated by guanine nucleotide exchange factors (GEF) and GTPase-activating proteins (GAP). GTP-binding protein that does not act as an allosteric activator of the cholera toxin catalytic subunit. Recruits CYTH1, CYTH2, CYTH3 and CYTH4 to the plasma membrane in GDP-bound form. This chain is ADP-ribosylation factor-like protein 4A (ARL4A), found in Homo sapiens (Human).